Consider the following 181-residue polypeptide: Adenylate kinase (181 aa).

10-15 is an ATP binding site; that stretch reads GAGKGT. An NMP region spans residues 30–59; the sequence is STGELFRRNIEEGTKLGVEAKRYLDAGDLV. AMP is bound by residues threonine 31, arginine 36, 57–59, 85–88, and glutamine 92; these read DLV and GYPR. Positions 126–132 are LID; that stretch reads GRGRADD. Residue arginine 127 participates in ATP binding. The AMP site is built by arginine 129 and arginine 140. Glycine 166 contributes to the ATP binding site.

The protein belongs to the adenylate kinase family. Monomer.

Its subcellular location is the cytoplasm. It catalyses the reaction AMP + ATP = 2 ADP. It participates in purine metabolism; AMP biosynthesis via salvage pathway; AMP from ADP: step 1/1. In terms of biological role, catalyzes the reversible transfer of the terminal phosphate group between ATP and AMP. Plays an important role in cellular energy homeostasis and in adenine nucleotide metabolism. This Mycobacterium tuberculosis (strain ATCC 25177 / H37Ra) protein is Adenylate kinase.